Reading from the N-terminus, the 351-residue chain is Sulfate/thiosulfate import ATP-binding protein CysA (351 aa).

One can recognise an ABC transporter domain in the interval 3-237 (ITVRNLHKRF…PRSAFVYEFL (235 aa)). Position 35-42 (35-42 (GPSGCGKT)) interacts with ATP.

This sequence belongs to the ABC transporter superfamily. Sulfate/tungstate importer (TC 3.A.1.6) family. As to quaternary structure, the complex is composed of two ATP-binding proteins (CysA), two transmembrane proteins (CysT and CysW) and a solute-binding protein (CysP).

The protein resides in the cell inner membrane. The enzyme catalyses sulfate(out) + ATP + H2O = sulfate(in) + ADP + phosphate + H(+). It catalyses the reaction thiosulfate(out) + ATP + H2O = thiosulfate(in) + ADP + phosphate + H(+). Part of the ABC transporter complex CysAWTP involved in sulfate/thiosulfate import. Responsible for energy coupling to the transport system. This is Sulfate/thiosulfate import ATP-binding protein CysA from Burkholderia pseudomallei (strain K96243).